A 282-amino-acid polypeptide reads, in one-letter code: NADPH-dependent 7-cyano-7-deazaguanine reductase (282 aa).

88-90 (IES) contributes to the substrate binding site. Residue 90-91 (SK) coordinates NADPH. The active-site Thioimide intermediate is the Cys-190. Catalysis depends on Asp-197, which acts as the Proton donor. Residue 229 to 230 (HE) participates in substrate binding. NADPH is bound at residue 258-259 (RG).

The protein belongs to the GTP cyclohydrolase I family. QueF type 2 subfamily. In terms of assembly, homodimer.

The protein localises to the cytoplasm. It carries out the reaction 7-aminomethyl-7-carbaguanine + 2 NADP(+) = 7-cyano-7-deazaguanine + 2 NADPH + 3 H(+). It functions in the pathway tRNA modification; tRNA-queuosine biosynthesis. In terms of biological role, catalyzes the NADPH-dependent reduction of 7-cyano-7-deazaguanine (preQ0) to 7-aminomethyl-7-deazaguanine (preQ1). The polypeptide is NADPH-dependent 7-cyano-7-deazaguanine reductase (Citrobacter koseri (strain ATCC BAA-895 / CDC 4225-83 / SGSC4696)).